We begin with the raw amino-acid sequence, 103 residues long: Pyrimidine/purine nucleoside phosphorylase (103 aa).

Belongs to the nucleoside phosphorylase PpnP family.

The enzyme catalyses a purine D-ribonucleoside + phosphate = a purine nucleobase + alpha-D-ribose 1-phosphate. It carries out the reaction adenosine + phosphate = alpha-D-ribose 1-phosphate + adenine. The catalysed reaction is cytidine + phosphate = cytosine + alpha-D-ribose 1-phosphate. It catalyses the reaction guanosine + phosphate = alpha-D-ribose 1-phosphate + guanine. The enzyme catalyses inosine + phosphate = alpha-D-ribose 1-phosphate + hypoxanthine. It carries out the reaction thymidine + phosphate = 2-deoxy-alpha-D-ribose 1-phosphate + thymine. The catalysed reaction is uridine + phosphate = alpha-D-ribose 1-phosphate + uracil. It catalyses the reaction xanthosine + phosphate = alpha-D-ribose 1-phosphate + xanthine. Its function is as follows. Catalyzes the phosphorolysis of diverse nucleosides, yielding D-ribose 1-phosphate and the respective free bases. Can use uridine, adenosine, guanosine, cytidine, thymidine, inosine and xanthosine as substrates. Also catalyzes the reverse reactions. The polypeptide is Pyrimidine/purine nucleoside phosphorylase (Shewanella denitrificans (strain OS217 / ATCC BAA-1090 / DSM 15013)).